A 290-amino-acid polypeptide reads, in one-letter code: Arylamine N-acetyltransferase, pineal gland isozyme NAT-10 (290 aa).

Cys-68 functions as the Acyl-thioester intermediate in the catalytic mechanism. Residues His-107 and Asp-122 contribute to the active site.

It belongs to the arylamine N-acetyltransferase family.

The enzyme catalyses an arylamine + acetyl-CoA = an N-acetylarylamine + CoA. This Gallus gallus (Chicken) protein is Arylamine N-acetyltransferase, pineal gland isozyme NAT-10.